The sequence spans 107 residues: Ferredoxin 1 (107 aa).

4Fe-4S ferredoxin-type domains are found at residues 2–30 (TFVVTDNCIKCKYTDCVEVCPVDCFYEGP) and 31–60 (NFLVIHPDECIDCALCEPECPAQAIFSEDE). [3Fe-4S] cluster-binding residues include cysteine 9 and cysteine 17. [4Fe-4S] cluster is bound by residues cysteine 21, cysteine 40, cysteine 43, and cysteine 46. [3Fe-4S] cluster is bound at residue cysteine 50.

Requires [4Fe-4S] cluster as cofactor. The cofactor is [3Fe-4S] cluster.

Ferredoxins are iron-sulfur proteins that transfer electrons in a wide variety of metabolic reactions. This is Ferredoxin 1 (fdxA) from Pseudomonas aeruginosa (strain ATCC 15692 / DSM 22644 / CIP 104116 / JCM 14847 / LMG 12228 / 1C / PRS 101 / PAO1).